The following is a 164-amino-acid chain: Large ribosomal subunit protein uL10 (164 aa).

It belongs to the universal ribosomal protein uL10 family. In terms of assembly, part of the ribosomal stalk of the 50S ribosomal subunit. The N-terminus interacts with L11 and the large rRNA to form the base of the stalk. The C-terminus forms an elongated spine to which L12 dimers bind in a sequential fashion forming a multimeric L10(L12)X complex.

Functionally, forms part of the ribosomal stalk, playing a central role in the interaction of the ribosome with GTP-bound translation factors. This is Large ribosomal subunit protein uL10 from Chromobacterium violaceum (strain ATCC 12472 / DSM 30191 / JCM 1249 / CCUG 213 / NBRC 12614 / NCIMB 9131 / NCTC 9757 / MK).